The sequence spans 117 residues: Protein MGF 110-13L (117 aa).

The first 16 residues, 1 to 16 (MKLFVLLSILVWLAQP), serve as a signal peptide directing secretion.

The protein belongs to the asfivirus MGF 110 family.

The sequence is that of Protein MGF 110-13L from Ornithodoros (relapsing fever ticks).